A 70-amino-acid chain; its full sequence is UPF0337 protein BC_3635 (70 aa).

Belongs to the UPF0337 (CsbD) family.

The polypeptide is UPF0337 protein BC_3635 (Bacillus cereus (strain ATCC 14579 / DSM 31 / CCUG 7414 / JCM 2152 / NBRC 15305 / NCIMB 9373 / NCTC 2599 / NRRL B-3711)).